The chain runs to 251 residues: Phosphate import ATP-binding protein PstB (251 aa).

Positions 5-246 (IKIRGVNFFY…PRDKRTEDYI (242 aa)) constitute an ABC transporter domain. 37-44 (GPSGCGKS) contacts ATP.

This sequence belongs to the ABC transporter superfamily. Phosphate importer (TC 3.A.1.7) family. In terms of assembly, the complex is composed of two ATP-binding proteins (PstB), two transmembrane proteins (PstC and PstA) and a solute-binding protein (PstS).

The protein localises to the cell membrane. It catalyses the reaction phosphate(out) + ATP + H2O = ADP + 2 phosphate(in) + H(+). Functionally, part of the ABC transporter complex PstSACB involved in phosphate import. Responsible for energy coupling to the transport system. This chain is Phosphate import ATP-binding protein PstB, found in Dehalococcoides mccartyi (strain CBDB1).